The primary structure comprises 145 residues: Transcription antitermination protein NusB (145 aa).

Belongs to the NusB family.

Its function is as follows. Involved in transcription antitermination. Required for transcription of ribosomal RNA (rRNA) genes. Binds specifically to the boxA antiterminator sequence of the ribosomal RNA (rrn) operons. In Paraburkholderia phymatum (strain DSM 17167 / CIP 108236 / LMG 21445 / STM815) (Burkholderia phymatum), this protein is Transcription antitermination protein NusB.